We begin with the raw amino-acid sequence, 419 residues long: MLYYLFDYLEKLQLPGARLFHYVSFRSAVAIVLALLLATVIGNRIIERLRKAQIGETIRDLGLEGQLSKKGTPTMGGLIIIISILIPTLLLARLDNVYILLMIVTTVLLGSLGFLDDYIKVFRKKKEGLHGRYKIIGQVGLGFIIGIVLYMNPAVVIKENSEVLRDGQVERVHFNKQEVKSTKTTIPFVKNNNFDYADILPLEGKTKVLFGWILFVCVAVVVVTFISNCANLTDGLDGLATGSSAIIGVVLAIFAYVSSHIEMASYLNIMFIPGAEELTIFAFAFVGATIGFLWYNAYPAQVFMGDTGSLTLGGIIAVFALIIRKEMLLPILCFVFIIEGLSVMIQVFYFKLTKRRTGEGRRIFKMTPLHHHFQKPGNAGIDAWLQKPMQAIPESKITVRFWLVGIIMAAITIATLKMR.

Helical transmembrane passes span 22–42 (YVSF…TVIG), 72–92 (TPTM…LLLA), 99–119 (ILLM…DDYI), 135–155 (IIGQ…NPAV), 208–228 (VLFG…FISN), 238–258 (GLAT…AYVS), 278–298 (LTIF…YNAY), 303–323 (FMGD…ALII), 328–348 (LLPI…IQVF), and 396–416 (KITV…IATL).

This sequence belongs to the glycosyltransferase 4 family. MraY subfamily. The cofactor is Mg(2+).

The protein resides in the cell inner membrane. It catalyses the reaction UDP-N-acetyl-alpha-D-muramoyl-L-alanyl-gamma-D-glutamyl-meso-2,6-diaminopimeloyl-D-alanyl-D-alanine + di-trans,octa-cis-undecaprenyl phosphate = di-trans,octa-cis-undecaprenyl diphospho-N-acetyl-alpha-D-muramoyl-L-alanyl-D-glutamyl-meso-2,6-diaminopimeloyl-D-alanyl-D-alanine + UMP. Its pathway is cell wall biogenesis; peptidoglycan biosynthesis. In terms of biological role, catalyzes the initial step of the lipid cycle reactions in the biosynthesis of the cell wall peptidoglycan: transfers peptidoglycan precursor phospho-MurNAc-pentapeptide from UDP-MurNAc-pentapeptide onto the lipid carrier undecaprenyl phosphate, yielding undecaprenyl-pyrophosphoryl-MurNAc-pentapeptide, known as lipid I. This Porphyromonas gingivalis (strain ATCC BAA-308 / W83) protein is Phospho-N-acetylmuramoyl-pentapeptide-transferase.